The sequence spans 479 residues: Transcription factor CP2-like protein 1 (479 aa).

Residues 1 to 52 form a mediate transcriptional repression region; sequence MLFWHTQPEHYNQHNSGSYLRDVLALPIFKQEEPQLSPENGARLPPLQYVLC. One can recognise a Grh/CP2 DB domain in the interval 43-280; sequence RLPPLQYVLC…PSPSYNGSPN (238 aa). 2 disordered regions span residues 219–248 and 260–301; these read KPKGADRKQKTDREKMEKRTAQEKEKYQPS and WPDV…LPLG. The segment covering 221-245 has biased composition (basic and acidic residues); the sequence is KGADRKQKTDREKMEKRTAQEKEKY. Residues 261–365 form an SAM2-like domain region; that stretch reads PDVPYQANNT…IRLFNAIKGR (105 aa). The segment covering 266-292 has biased composition (polar residues); it reads QANNTPSPSYNGSPNSFGLREGNSSPN.

Belongs to the grh/CP2 family. CP2 subfamily. Forms homohexamers via its SAM-like domain. Interacts with Mta1; which is indispensable for Tfcp2l1-mediated self-renewal-promoting effect and endoderm-inhibiting action. In terms of tissue distribution, highly expressed in placenta, testis, small intestine, kidney and stomach. Low levels of expression in lung, mesenteric lymph nodes, muscle, ovary, and thymus. No expression was detected in brain, heart, liver, and spleen. Expressed in eccrine glands in the palm. Expression is prominent in both kidney collecting ducts intercalated (IC) and principal (PC) cells. Also expressed in the thick limb of Henle and connecting segments of the nephron.

Its subcellular location is the nucleus. Transcription factor that facilitates establishment and maintenance of pluripotency in embryonic stem cells (ESCs). With Klf2, acts as the major effector of self-renewal that mediates induction of pluripotency downstream of LIF/Stat3 and Wnt/beta-catenin signaling. Required for normal duct development in the salivary gland and kidney. Coordinates the development of the kidney collecting ducts intercalated (IC) and principal (PC) cells, which regulate acid-base and salt-water homeostasis, respectively. Regulates the expression of IC genes including subunits B1 and D2 of the V-ATPase complex, Oxgr1, Ca12, Slc4a1, Aqp6 and IC-specific transcription factor Foxi1. Also regulates the expression of Jag1 and subsequent notch signaling in the collecting duct. Jag1 initiates notch signaling in PCs but inhibits notch signaling in ICs. Acts as a transcriptional suppressor that may suppress UBP1-mediated transcriptional activation. Modulates the placental expression of CYP11A1. This is Transcription factor CP2-like protein 1 (Tfcp2l1) from Mus musculus (Mouse).